Here is a 437-residue protein sequence, read N- to C-terminus: MLGDTTLKQLKDEISTLEYERYIKQLRYDEEASRTDLAVYIAPNQFIANWVKTKYGERLAHLFELSTGIRPKIEIRLGSLKKDVKSSSPKAGVSKGQKSTILNPSFTFDSFVVGNSNRFAYEVSQNVAKKQGIAYNPLLIYGGTGLGKTHLLNSIGNYNVAKGKSVIYVTSEQFLNDYLYHIRNNTMDRFRDKYRACDYLLIDDVQFFGGKPQIQEEFFHTFNELHNKNKQIVLTSDKTPKQIAGLEERLKSRFEWGMVSDIQPPELETKINIIKKKCEFDGIYLSNEIISYIATNMDNNIREIEGIIIKLNAYANLMNQEITLQFAKNVLKEQIKEERENITLENIIEVVSKELNVKPAEIKSKGRSKNIANARRIVIFLARTLTPNSMPSLAQFFGMKDHSSVSKAMKTVKTEIEEDANFKMVIEELKNKIKSRN.

A domain I, interacts with DnaA modulators region spans residues 1 to 69 (MLGDTTLKQL…AHLFELSTGI (69 aa)). The tract at residues 69 to 100 (IRPKIEIRLGSLKKDVKSSSPKAGVSKGQKST) is domain II. Positions 101 to 315 (ILNPSFTFDS…GIIIKLNAYA (215 aa)) are domain III, AAA+ region. ATP contacts are provided by Gly145, Gly147, Lys148, and Thr149. Positions 316–437 (NLMNQEITLQ…ELKNKIKSRN (122 aa)) are domain IV, binds dsDNA.

This sequence belongs to the DnaA family. In terms of assembly, oligomerizes as a right-handed, spiral filament on DNA at oriC.

The protein resides in the cytoplasm. Its function is as follows. Plays an essential role in the initiation and regulation of chromosomal replication. ATP-DnaA binds to the origin of replication (oriC) to initiate formation of the DNA replication initiation complex once per cell cycle. Binds the DnaA box (a 9 base pair repeat at the origin) and separates the double-stranded (ds)DNA. Forms a right-handed helical filament on oriC DNA; dsDNA binds to the exterior of the filament while single-stranded (ss)DNA is stabiized in the filament's interior. The ATP-DnaA-oriC complex binds and stabilizes one strand of the AT-rich DNA unwinding element (DUE), permitting loading of DNA polymerase. After initiation quickly degrades to an ADP-DnaA complex that is not apt for DNA replication. Binds acidic phospholipids. This is Chromosomal replication initiator protein DnaA from Wolinella succinogenes (strain ATCC 29543 / DSM 1740 / CCUG 13145 / JCM 31913 / LMG 7466 / NCTC 11488 / FDC 602W) (Vibrio succinogenes).